The chain runs to 916 residues: MLTNIAKKIFGSRNDRLLKQYRKSVARINALEEQMQALSDADLQAKTAEFKQRLADGQTLDGILPEAFAVCREASRRVLGMRHFDVQLIGGMVLHDGKIAEMRTGEGKTLVATLAVYLNALAGKGVHVVTVNDYLASRDAGIMEPLYNFLGLTVGVIISDMQPFDRQNAYAADITYGTNNEFGFDYLRDNMVTDQYDKVQRELNFAVVDEVDSILIDEARTPLIISGQADDNIQLYQIMNTVPPHLVRQETEEGEGDYWVDEKAHQVILSETGHEHAEQILTQMGLLAENDSLYSAANISLMHHLMAALRAHSLFHKDQHYVIQDGEIVIVDEFTGRLMSGRRWSEGLHQAVEAKEGVEIKRENQTLASITFQNYFRLYTKLSGMTGTADTEAFEFQSIYNLETVIIPTNRPVQRKDLNDQIFRSAEEKFEAVVKDIEECHKRGQPVLVGTTSIENSELVSRLLQKAGLPHNVLNAKEHEREALIVAQAGKVGAITVATNMAGRGTDIVLGGNLKHQTDAIRADETLSDEEKQAQIAALENGWQAEHDKVMEAGGLHIIGTERHESRRIDNQLRGRSGRQGDPGSSRFYLSFEDPLLRLFALDRAAAILNRLAPERGVAIEHNLLTRQIEGAQRKVEGRNFDMRKQVLEYDDVANEQRKVIYSQRNEILTSKDIGDLMQEIRSDAVSDLVDTYMPPDSMEEQWDIPTLENRLAAEFRLQEDIQSWLKADNAIDGQDIKERLIERIENEYAAKTELVGKQAMADFERNVMLQAIDNQWREHLAAMDYLRQGIHLRSYAQKNPKQEYKREAFTMFQDLWNGIKFHIASLLTSVQIEQNPVAAVEEQPVGNIQSIHSESPDIEELLGQSQTDLVTEAFNPDGTDFSPEALEARGQIVHRNDPCPCGSGLKYKQCHGKLA.

Residues Gln87, 105 to 109 (GEGKT), and Asp507 contribute to the ATP site. Cys900, Cys902, Cys911, and His912 together coordinate Zn(2+).

Belongs to the SecA family. As to quaternary structure, monomer and homodimer. Part of the essential Sec protein translocation apparatus which comprises SecA, SecYEG and auxiliary proteins SecDF-YajC and YidC. The cofactor is Zn(2+).

It is found in the cell inner membrane. Its subcellular location is the cytoplasm. It carries out the reaction ATP + H2O + cellular proteinSide 1 = ADP + phosphate + cellular proteinSide 2.. Part of the Sec protein translocase complex. Interacts with the SecYEG preprotein conducting channel. Has a central role in coupling the hydrolysis of ATP to the transfer of proteins into and across the cell membrane, serving both as a receptor for the preprotein-SecB complex and as an ATP-driven molecular motor driving the stepwise translocation of polypeptide chains across the membrane. The sequence is that of Protein translocase subunit SecA from Neisseria gonorrhoeae (strain ATCC 700825 / FA 1090).